A 448-amino-acid chain; its full sequence is Tryptamine benzoyltransferase 2 (448 aa).

Positions M1–L20 are disordered. Residues H155 and D386 each act as proton acceptor in the active site.

This sequence belongs to the plant acyltransferase family.

In terms of biological role, hydroxycinnamoyl transferase that catalyzes the transfer of an acyl from benzoyl-CoA to tryptamine, to produce benzoyl tryptamine. Serotonin and tyramine serve as acyl acceptors in vitro. Specific for benzoyl-CoA as acyl donor. Has no activity with p-coumaroyl-CoA, caffeoyl-CoA, or feruloyl-CoA as acyl donors. In Oryza sativa subsp. japonica (Rice), this protein is Tryptamine benzoyltransferase 2.